A 279-amino-acid polypeptide reads, in one-letter code: Large ribosomal subunit protein uL2 (279 aa).

Disordered stretches follow at residues 29 to 59 (PEKS…GGHK) and 224 to 279 (VAMN…KNKR). Residues 50–59 (TTRHKGGGHK) are compositionally biased toward basic residues. A compositionally biased stretch (basic and acidic residues) spans 253-268 (PEGRTRRPNKESDKLI). The span at 269-279 (VRRRRTGKNKR) shows a compositional bias: basic residues.

The protein belongs to the universal ribosomal protein uL2 family. As to quaternary structure, part of the 50S ribosomal subunit. Forms a bridge to the 30S subunit in the 70S ribosome.

Its function is as follows. One of the primary rRNA binding proteins. Required for association of the 30S and 50S subunits to form the 70S ribosome, for tRNA binding and peptide bond formation. It has been suggested to have peptidyltransferase activity; this is somewhat controversial. Makes several contacts with the 16S rRNA in the 70S ribosome. This Paenarthrobacter aurescens (strain TC1) protein is Large ribosomal subunit protein uL2.